A 93-amino-acid chain; its full sequence is Small ribosomal subunit protein uS19 (93 aa).

The protein belongs to the universal ribosomal protein uS19 family.

Functionally, protein S19 forms a complex with S13 that binds strongly to the 16S ribosomal RNA. The sequence is that of Small ribosomal subunit protein uS19 from Nautilia profundicola (strain ATCC BAA-1463 / DSM 18972 / AmH).